The sequence spans 587 residues: MSRARSHLRAALFLAAASARGITTQVAARRGLSAWPVPQEPSMEYQDAVRMLNTLQTNAGYLEQVKRQRGDPQTQLEAMELYLARSGLQVEDLDRLNIIHVTGTKGKGSTCAFTECILRSYGLKTGFFSSPHLVQVRERIRINGQPISPELFTKYFWRLYHRLEETKDGSCVSMPPYFRFLTLMAFHVFLQEKVDLAVVEVGIGGAYDCTNIIRKPVVCGVSSLGIDHTSLLGDTVEKIAWQKGGIFKQGVPAFTVLQPEGPLAVLRDRAQQISCPLYLCPMLEALEEGGPPLTLGLEGEHQRSNAALALQLAHCWLQRQDRHGAGEPKASRPGLLWQLPLAPVFQPTSHMRLGLRNTEWPGRTQVLRRGPLTWYLDGAHTASSAQACVRWFRQALQGRERPSGGPEVRVLLFNATGDRDPAALLKLLQPCQFDYAVFCPNLTEVSSTGNADQQNFTVTLDQVLLRCLEHQQHWNHLDEEQASPDLWSAPSPEPGGSASLLLAPHPPHTCSASSLVFSCISHALQWISQGRDPIFQPPSPPKGLLTHPVAHSGASILREAAAIHVLVTGSLHLVGGVLKLLEPALSQ.

The N-terminal 42 residues, 1-42 (MSRARSHLRAALFLAAASARGITTQVAARRGLSAWPVPQEPS), are a transit peptide targeting the mitochondrion. Residue methionine 43 is modified to N-acetylmethionine. 106 to 109 (GKGS) serves as a coordination point for ATP. Positions 130, 200, and 228 each coordinate Mg(2+). 2 residues coordinate ATP: arginine 363 and aspartate 377. Phosphoserine is present on serine 539.

This sequence belongs to the folylpolyglutamate synthase family. Monomer. The cofactor is K(+). Requires NH4(+) as cofactor.

The protein localises to the mitochondrion inner membrane. Its subcellular location is the mitochondrion matrix. It localises to the cytoplasm. It carries out the reaction (6S)-5,6,7,8-tetrahydrofolyl-(gamma-L-Glu)(n) + L-glutamate + ATP = (6S)-5,6,7,8-tetrahydrofolyl-(gamma-L-Glu)(n+1) + ADP + phosphate + H(+). It functions in the pathway cofactor biosynthesis; tetrahydrofolylpolyglutamate biosynthesis. Its activity is regulated as follows. Activated by 10 mM sodium bicarbonate. Catalyzes conversion of folates to polyglutamate derivatives allowing concentration of folate compounds in the cell and the intracellular retention of these cofactors, which are important substrates for most of the folate-dependent enzymes that are involved in one-carbon transfer reactions involved in purine, pyrimidine and amino acid synthesis. Unsubstituted reduced folates are the preferred substrates. Metabolizes methotrexate (MTX) to polyglutamates. The sequence is that of Folylpolyglutamate synthase, mitochondrial (FPGS) from Homo sapiens (Human).